The sequence spans 365 residues: S-adenosylmethionine:tRNA ribosyltransferase-isomerase (365 aa).

This sequence belongs to the QueA family. As to quaternary structure, monomer.

Its subcellular location is the cytoplasm. It carries out the reaction 7-aminomethyl-7-carbaguanosine(34) in tRNA + S-adenosyl-L-methionine = epoxyqueuosine(34) in tRNA + adenine + L-methionine + 2 H(+). The protein operates within tRNA modification; tRNA-queuosine biosynthesis. Its function is as follows. Transfers and isomerizes the ribose moiety from AdoMet to the 7-aminomethyl group of 7-deazaguanine (preQ1-tRNA) to give epoxyqueuosine (oQ-tRNA). The polypeptide is S-adenosylmethionine:tRNA ribosyltransferase-isomerase (Rickettsia rickettsii (strain Iowa)).